We begin with the raw amino-acid sequence, 219 residues long: Peptide methionine sulfoxide reductase MsrA (219 aa).

The active site involves C58.

Belongs to the MsrA Met sulfoxide reductase family.

The enzyme catalyses L-methionyl-[protein] + [thioredoxin]-disulfide + H2O = L-methionyl-(S)-S-oxide-[protein] + [thioredoxin]-dithiol. It carries out the reaction [thioredoxin]-disulfide + L-methionine + H2O = L-methionine (S)-S-oxide + [thioredoxin]-dithiol. In terms of biological role, has an important function as a repair enzyme for proteins that have been inactivated by oxidation. Catalyzes the reversible oxidation-reduction of methionine sulfoxide in proteins to methionine. This chain is Peptide methionine sulfoxide reductase MsrA, found in Ectopseudomonas mendocina (strain ymp) (Pseudomonas mendocina).